We begin with the raw amino-acid sequence, 348 residues long: tRNA N6-adenosine threonylcarbamoyltransferase (348 aa).

The Fe cation site is built by His-116 and His-120. Substrate is bound by residues 138–142 (QVSGG), Asp-171, Gly-184, Asp-188, and Asn-277. Asp-309 contacts Fe cation.

Belongs to the KAE1 / TsaD family. Fe(2+) is required as a cofactor.

The protein resides in the cytoplasm. It catalyses the reaction L-threonylcarbamoyladenylate + adenosine(37) in tRNA = N(6)-L-threonylcarbamoyladenosine(37) in tRNA + AMP + H(+). Functionally, required for the formation of a threonylcarbamoyl group on adenosine at position 37 (t(6)A37) in tRNAs that read codons beginning with adenine. Is involved in the transfer of the threonylcarbamoyl moiety of threonylcarbamoyl-AMP (TC-AMP) to the N6 group of A37, together with TsaE and TsaB. TsaD likely plays a direct catalytic role in this reaction. This Lactobacillus gasseri (strain ATCC 33323 / DSM 20243 / BCRC 14619 / CIP 102991 / JCM 1131 / KCTC 3163 / NCIMB 11718 / NCTC 13722 / AM63) protein is tRNA N6-adenosine threonylcarbamoyltransferase.